A 311-amino-acid polypeptide reads, in one-letter code: MVVWIKGDRLHTETLEWARRHVKELERYGVTPKLAVLLLNDDPIELETQHKYVSLKARDIKSIGGEVELFELYKEPPEKREVAALKLIERLNNADDVTGILVQKPLPPYVDETKIFERLSPLKDVDGLTPENKKRLVTGFDLDRDILPCTPAGILELFRQYKIDVRGKDVVVVGKGTLVGFPLSIMLMQLDATVTVLHALSKDRKYYVRNADIIISAVGRPPELYSDNPWKLTGDFIKEGAVVVGVGGKVDPVTKKWYFDVDEKSVAEKASYLTPNIGGVGLATRARLVKNLIITSYMVATRVASPRLLAL.

G174–G176 serves as a coordination point for NADP(+).

Belongs to the tetrahydrofolate dehydrogenase/cyclohydrolase family. Homodimer.

The enzyme catalyses (6R)-5,10-methylene-5,6,7,8-tetrahydrofolate + NADP(+) = (6R)-5,10-methenyltetrahydrofolate + NADPH. It carries out the reaction (6R)-5,10-methenyltetrahydrofolate + H2O = (6R)-10-formyltetrahydrofolate + H(+). It functions in the pathway one-carbon metabolism; tetrahydrofolate interconversion. In terms of biological role, catalyzes the oxidation of 5,10-methylenetetrahydrofolate to 5,10-methenyltetrahydrofolate and then the hydrolysis of 5,10-methenyltetrahydrofolate to 10-formyltetrahydrofolate. In Pyrobaculum islandicum (strain DSM 4184 / JCM 9189 / GEO3), this protein is Bifunctional protein FolD.